The primary structure comprises 265 residues: Neuronal membrane glycoprotein M6-b (265 aa).

The chain crosses the membrane as a helical span at residues 31–51; it reads GGVPYASLVATILCFSGVALF. A glycan (N-linked (GlcNAc...) asparagine) is linked at Asn-73. Helical transmembrane passes span 90–110 and 136–156; these read VIYGIASFFFLYGIILLAEGF and FVFLTYVLGVAWLGVFGFSAV. Asn-177 is a glycosylation site (N-linked (GlcNAc...) asparagine). Residues 224-244 traverse the membrane as a helical segment; sequence LFIVACAGAGATVIALLIYMM. Position 257 is a phosphoserine (Ser-257).

This sequence belongs to the myelin proteolipid protein family. Interacts with SERT. Neurons and glia; cerebellar Bergmann glia, in glia within white matter tracts of the cerebellum and cerebrum, and in embryonic dorsal root ganglia.

It is found in the cell membrane. Functionally, may be involved in neural development. Involved in regulation of osteoblast function and bone formation. Involved in matrix vesicle release by osteoblasts; this function seems to involve maintenance of the actin cytoskeleton. May be involved in cellular trafficking of SERT and thereby in regulation of serotonin uptake. The sequence is that of Neuronal membrane glycoprotein M6-b (GPM6B) from Homo sapiens (Human).